Here is a 220-residue protein sequence, read N- to C-terminus: MNLKQLAGEYAATFVKDGMKIGLGTGSTVYWTIEKLGERVKEGLSFQAVPTSKETEVLAQQLNIPLISLNDIQSLDLTIDGADEIDSNLHLIKGGGGALLREKIVASSSKELLIIADESKLVTHLGTFPLPVEIIPFSWKQTESKIQSLGCQTTLRLKNNETFITDNNNMIIDCVFPHNITNPANLHNHLKMITGVVETGLFVNMTSKAIIGTKNGIQEL.

Substrate contacts are provided by residues 25–28 (TGST), 80–83 (DGAD), and 93–96 (KGGG). Residue Glu102 is the Proton acceptor of the active site. A substrate-binding site is contributed by Lys120.

This sequence belongs to the ribose 5-phosphate isomerase family. Homodimer.

It carries out the reaction aldehydo-D-ribose 5-phosphate = D-ribulose 5-phosphate. It functions in the pathway carbohydrate degradation; pentose phosphate pathway; D-ribose 5-phosphate from D-ribulose 5-phosphate (non-oxidative stage): step 1/1. Catalyzes the reversible conversion of ribose-5-phosphate to ribulose 5-phosphate. The protein is Ribose-5-phosphate isomerase A of Bacillus cereus (strain ATCC 10987 / NRS 248).